The primary structure comprises 228 residues: Max-interacting protein 1 (228 aa).

Disordered regions lie at residues 29–76 (GYAS…NELE) and 162–228 (GSTI…SFTS). Positions 43–56 (QHSKPPRRLSRAQK) are enriched in basic residues. Residues 57 to 70 (HSSGSSNTSTANRS) are compositionally biased toward polar residues. The 53-residue stretch at 67–119 (ANRSTHNELEKNRRAHLRLCLERLKVLIPLGPDCTRHTTLGLLNKAKAHIKKL) folds into the bHLH domain. Residues 173–183 (EREEIEVDVES) are compositionally biased toward acidic residues. The span at 216–228 (GYSSASVKLSFTS) shows a compositional bias: polar residues.

Efficient DNA binding requires dimerization with another bHLH protein. Binds DNA as a heterodimer with MAX. Interacts with SMC3. Interacts with RNF17.

The protein resides in the nucleus. Its function is as follows. Transcriptional repressor. MXI1 binds with MAX to form a sequence-specific DNA-binding protein complex which recognizes the core sequence 5'-CAC[GA]TG-3'. MXI1 thus antagonizes MYC transcriptional activity by competing for MAX. The chain is Max-interacting protein 1 (Mxi1) from Rattus norvegicus (Rat).